The primary structure comprises 185 residues: ATP-dependent protease subunit HslV (185 aa).

Residue Thr2 is part of the active site. Gly157, Cys160, and Thr163 together coordinate Na(+).

The protein belongs to the peptidase T1B family. HslV subfamily. In terms of assembly, a double ring-shaped homohexamer of HslV is capped on each side by a ring-shaped HslU homohexamer. The assembly of the HslU/HslV complex is dependent on binding of ATP.

The protein localises to the cytoplasm. The catalysed reaction is ATP-dependent cleavage of peptide bonds with broad specificity.. With respect to regulation, allosterically activated by HslU binding. Its function is as follows. Protease subunit of a proteasome-like degradation complex believed to be a general protein degrading machinery. The protein is ATP-dependent protease subunit HslV of Idiomarina loihiensis (strain ATCC BAA-735 / DSM 15497 / L2-TR).